A 220-amino-acid polypeptide reads, in one-letter code: UPF0758 protein ASA_4229 (220 aa).

In terms of domain architecture, MPN spans 95 to 220 (EQLQRGDALT…TVSFAERGWL (126 aa)). Residues H169, H171, and D182 each contribute to the Zn(2+) site. A JAMM motif motif is present at residues 169 to 182 (HNHPSGVAEPSRAD).

This sequence belongs to the UPF0758 family.

The chain is UPF0758 protein ASA_4229 from Aeromonas salmonicida (strain A449).